We begin with the raw amino-acid sequence, 351 residues long: Histidinol-phosphate aminotransferase (351 aa).

Lys213 carries the N6-(pyridoxal phosphate)lysine modification.

The protein belongs to the class-II pyridoxal-phosphate-dependent aminotransferase family. Histidinol-phosphate aminotransferase subfamily. Homodimer. The cofactor is pyridoxal 5'-phosphate.

The enzyme catalyses L-histidinol phosphate + 2-oxoglutarate = 3-(imidazol-4-yl)-2-oxopropyl phosphate + L-glutamate. The protein operates within amino-acid biosynthesis; L-histidine biosynthesis; L-histidine from 5-phospho-alpha-D-ribose 1-diphosphate: step 7/9. This is Histidinol-phosphate aminotransferase from Thermoanaerobacter sp. (strain X514).